Here is a 278-residue protein sequence, read N- to C-terminus: 3-oxoacyl-[acyl-carrier-protein] reductase (278 aa).

The NADP(+) site is built by Thr-13, Arg-14, Ile-16, Ser-36, Ser-40, Thr-44, Asp-66, Phe-67, Glu-77, Gly-122, Gln-125, and Glu-126. The active-site Proton donor is the Ser-182. Residues Tyr-198, Lys-202, Leu-230, and Val-231 each contribute to the NADP(+) site. Tyr-198 serves as the catalytic Proton acceptor. Lys-202 functions as the Lowers pKa of active site Tyr in the catalytic mechanism.

This sequence belongs to the short-chain dehydrogenases/reductases (SDR) family.

Its subcellular location is the mitochondrion. The catalysed reaction is a (3R)-hydroxyacyl-[ACP] + NADP(+) = a 3-oxoacyl-[ACP] + NADPH + H(+). It functions in the pathway lipid metabolism; fatty acid biosynthesis. Involved in biosynthesis of fatty acids in mitochondria. The sequence is that of 3-oxoacyl-[acyl-carrier-protein] reductase (OAR1) from Saccharomyces cerevisiae (strain ATCC 204508 / S288c) (Baker's yeast).